The chain runs to 1459 residues: MSDREFVTVDPVTIIIKECINLSTAMRKYSKFTSQSGVAALLGGGSEIFSNQDDYLAHTFNNLNTNKHNDPFLSGFIQLRLMLNKLKNLDNIDSLTILQPFLLIVSTSSISGYITSLALDSLQKFFTLNIINESSQNYIGAHRATVNALTHCRFEGSQQLSDDSVLLKVVFLLRSIVDSPYGDLLSNSIIYDVLQTILSLACNNRRSEVLRNAAQSTMIAVTVKIFSKLKTIEPVNVNQIYINDESYTNDVLKADTIGTNVESKEEGSQEDPIGMKVNNEEAISEDDGIEEEHIHSEKSTNGAEQLDIVQKTTRSNSRIQAYADDNYGLPVVRQYLNLLLSLIAPENELKHSYSTRIFGLELIQTALEISGDRLQLYPRLFTLISDPIFKSILFIIQNTTKLSLLQATLQLFTTLVVILGNNLQLQIELTLTRIFSILLDDGTANNSSSENKNKPSIIKELLIEQISILWTRSPSFFTSTFINFDCNLDRADVSINFLKALTKLALPESALTTTESVPPICLEGLVSLVDDMFDHMKDIDREEFGRQKNEMEILKKRDRKTEFIECTNAFNEKPKKGIPMLIEKGFIASDSDKDIAEFLFNNNNRMNKKTIGLLLCHPDKVSLLNEYIRLFDFSGLRVDEAIRILLTKFRLPGESQQIERIIEAFSSAYCENQDYDPSKISDNAEDDISTVQPDADSVFILSYSIIMLNTDLHNPQVKEHMSFEDYSGNLKGCCNHKDFPFWYLDRIYCSIRDKEIVMPEEHHGNEKWFEDAWNNLISSTTVITEIKKDTQSVMDKLTPLELLNFDRAIFKQVGPSIVSTLFNIYVVASDDHISTRMITSLDKCSYISAFFDFKDLFNDILNSIAKGTTLINSSHDDELSTLAFEYGPMPLVQIKFEDTNTEIPVSTDAVRFGRSFKGQLNTVVFFRIIRRNKDPKIFSKELWLNIVNIILTLYEDLILSPDIFPDLQKRLKLSNLPKPSPEISINKSKESKGLLSTFASYLKGDEEPTEEEIKSSKKAMECIKSSNIAASVFGNESNITADLIKTLLDSAKTEKNADNSRYFEAELLFIIELTIALFLFCKEEKELGKFILQKVFQLSHTKGLTKRTVRRMLTYKILLISLCADQTEYLSKLINDELLKKGDIFTQKFFATNQGKEFLKRLFSLTESEFYRGFLLGNENFWKFLRKVTAMKEQSESIFEYLNESIKTDSNILTNENFMWVLGLLDEISSMGAVGNHWEIEYKKLTESGHKIDKENPYKKSIELSLKSIQLTSHLLEDNNDLRKNEIFAIIQALAHQCINPCKQISEFAVVTLEQTLINKIEIPTNEMESVEELIEGGLLPLLNSSETQEDQKILISSILTIISNVYLHYLKLGKTSNETFLKILSIFNKFVEDSDIEKKLQQLILDKKSIEKGNGSSSHGSAHEQTPESNDVEIEATAPIDDNTDDDNKPKLSDVEKD.

2 positions are modified to phosphoserine: Ser-46 and Ser-284. Residues 570 to 714 enclose the SEC7 domain; it reads FNEKPKKGIP…IIMLNTDLHN (145 aa). Positions 1412-1459 are disordered; it reads EKGNGSSSHGSAHEQTPESNDVEIEATAPIDDNTDDDNKPKLSDVEKD. The span at 1447 to 1459 shows a compositional bias: basic and acidic residues; the sequence is DDNKPKLSDVEKD.

In terms of assembly, interacts (via SEC7 domain) with DRS2 (via C-terminus); the interaction is direct. Interacts with GMH1.

The protein resides in the cytoplasm. It localises to the cytosol. Its subcellular location is the membrane. It is found in the golgi apparatus membrane. Functionally, activates the ARF proteins by exchanging bound GDP for free GTP. Plays a role in maintaining mitochondrial morphology. Stimulates DRS2 flippase activity. This Saccharomyces cerevisiae (strain ATCC 204508 / S288c) (Baker's yeast) protein is ARF guanine-nucleotide exchange factor 2 (GEA2).